Consider the following 90-residue polypeptide: Bombyxin B-7 (90 aa).

The signal sequence occupies residues 1 to 20 (MMKTSVMLMLVVVISLMCSG). 3 disulfide bridges follow: C30–C76, C42–C89, and C75–C80. Residues 49-67 (GGAQYAPYFWTRQYLGSRG) constitute a propeptide, c peptide like.

The protein belongs to the insulin family. In terms of assembly, heterodimer of a B chain and an A chain linked by two disulfide bonds.

Its subcellular location is the secreted. In terms of biological role, brain peptide responsible for activation of prothoracic glands to produce ecdysone in insects. The polypeptide is Bombyxin B-7 (BBXB7) (Bombyx mori (Silk moth)).